Reading from the N-terminus, the 694-residue chain is Katanin p80 WD40 repeat-containing subunit B1 (694 aa).

WD repeat units follow at residues 18 to 58 (AHSS…CIMS), 61 to 100 (GHTS…ILRT), 103 to 142 (GHKA…CVFR), 145 to 186 (GHTQ…TEFT), 188 to 226 (HTSA…MIGS), and 229 to 269 (GETG…DVVH). Disordered regions lie at residues 319–410 (KPIP…PFPA) and 470–492 (TTSA…STGI). A compositionally biased stretch (polar residues) spans 327 to 349 (ALGTTLRRNYERPTTSCTGQEMK). Over residues 350 to 378 (QSSEADRRSPEGERRSPSSEDEKEDKESS) the composition is skewed to basic and acidic residues. Over residues 470–481 (TTSASSPSRPVV) the composition is skewed to low complexity. Polar residues predominate over residues 482–492 (NTTKPKPSTGI).

It belongs to the WD repeat KATNB1 family. As to quaternary structure, interacts with katna1. This interaction enhances the microtubule binding and severing activity of katna1 and also targets this activity to the centrosome.

It is found in the cytoplasm. It localises to the cytoskeleton. The protein localises to the microtubule organizing center. Its subcellular location is the centrosome. The protein resides in the spindle pole. It is found in the spindle. Functionally, participates in a complex which severs microtubules in an ATP-dependent manner. May act to target the enzymatic subunit of this complex to sites of action such as the centrosome. Microtubule severing may promote rapid reorganization of cellular microtubule arrays and the release of microtubules from the centrosome following nucleation. This is Katanin p80 WD40 repeat-containing subunit B1 (katnb1) from Danio rerio (Zebrafish).